Reading from the N-terminus, the 472-residue chain is Exodeoxyribonuclease 7 large subunit (472 aa).

It belongs to the XseA family. Heterooligomer composed of large and small subunits.

The protein localises to the cytoplasm. It carries out the reaction Exonucleolytic cleavage in either 5'- to 3'- or 3'- to 5'-direction to yield nucleoside 5'-phosphates.. In terms of biological role, bidirectionally degrades single-stranded DNA into large acid-insoluble oligonucleotides, which are then degraded further into small acid-soluble oligonucleotides. This is Exodeoxyribonuclease 7 large subunit from Carboxydothermus hydrogenoformans (strain ATCC BAA-161 / DSM 6008 / Z-2901).